Here is a 329-residue protein sequence, read N- to C-terminus: Dolichyl-diphosphooligosaccharide--protein glycosyltransferase subunit MAGT1 (329 aa).

A signal peptide spans 1-23 (MAGLKGLLFGGILFAMCGGLSEG). At 24–178 (QKKKEMVLSD…DVNIRVIRPP (155 aa)) the chain is on the extracellular side. The Thioredoxin domain maps to 41–169 (WASKRPVIRM…LARWVADRTD (129 aa)). N65 carries N-linked (GlcNAc...) asparagine glycosylation. C81 and C84 form a disulfide bridge. The helical transmembrane segment at 179–199 (NYAGPLMLGLLLAVIGGLVYL) threads the bilayer. The Cytoplasmic portion of the chain corresponds to 200–212 (RRSNLDFLNNKTG). Residues 213-233 (WALAALCFVLAMTSGQMWNHI) form a helical membrane-spanning segment. Residues 234–258 (RGPPYAHKNPHTNQVNYIHGSSQAQ) are Extracellular-facing. A helical transmembrane segment spans residues 259–279 (FVAETHIVLLFNGAVTLGMVL). At 280–294 (LHEAATSDLDVGKRK) the chain is on the cytoplasmic side. Residues 295–315 (IMCIAGITLVVIFFSWLLSVF) traverse the membrane as a helical segment. Residues 316 to 329 (RSKYHGYPYSFLMT) are Extracellular-facing.

This sequence belongs to the OST3/OST6 family. As to quaternary structure, accessory component of the STT3B-containing form of the oligosaccharyltransferase (OST) complex.

Its subcellular location is the cell membrane. It localises to the endoplasmic reticulum. The protein resides in the endoplasmic reticulum membrane. The protein operates within protein modification; protein glycosylation. In terms of biological role, accessory component of the STT3B-containing form of the N-oligosaccharyl transferase (OST) complex which catalyzes the transfer of a high mannose oligosaccharide from a lipid-linked oligosaccharide donor to an asparagine residue within an Asn-X-Ser/Thr consensus motif in nascent polypeptide chains. May be involved in substrate-specific N-glycosylation involving acceptor sites that are near cysteine residues. Could indirectly play a role in Mg(2+) transport in epithelial cells. This chain is Dolichyl-diphosphooligosaccharide--protein glycosyltransferase subunit MAGT1, found in Xenopus laevis (African clawed frog).